The following is a 251-amino-acid chain: Cell division protein ZapD (251 aa).

This sequence belongs to the ZapD family. In terms of assembly, interacts with FtsZ.

The protein resides in the cytoplasm. Functionally, cell division factor that enhances FtsZ-ring assembly. Directly interacts with FtsZ and promotes bundling of FtsZ protofilaments, with a reduction in FtsZ GTPase activity. This Burkholderia vietnamiensis (strain G4 / LMG 22486) (Burkholderia cepacia (strain R1808)) protein is Cell division protein ZapD.